Here is a 339-residue protein sequence, read N- to C-terminus: Probable cytosolic iron-sulfur protein assembly protein CIAO1 (339 aa).

WD repeat units follow at residues 14-53 (HPDSRCWFLAWNPAGTLLASCGGDRSVRIWGREGDSWICK), 59-98 (GHQRTVRKVAWSPCGNYLASASFDATTCIWKKNEDDFECV), 103-142 (GHENEVKSVAWAPSGNLLATCSRDKSVWVWEVDEEDEYEC), 148-187 (SHTQDVKHVVWHPSQELLASASYDDTVKLYREEEDDWVCC), 192-231 (GHESTVWSLAFDPSGQRLASCSDDRTVRIWRQYLPGNEQG), 250-289 (FHSRTIYDVAWCQLTGTLATACGDDAIRVFEEDPGSDPQQ), and 301-339 (AHSQDVNCVAWNPKERGLLASCSDDGELAFWKYQPSEGI). The LYR motif; required for interaction with HSC20 signature appears at 176 to 178 (LYR).

It belongs to the WD repeat CIA1 family. Component of the CIA complex. Interacts with CIAO2A and forms a complex with CIAO2B and MMS19; the interactions with CIAO2A and CIAO2B are mutually exclusive. Interacts with CHD1L, ERCC2, IREB2 and POLD1. Component of the MMXD complex, which includes CIAO1, ERCC2, CIAO2B, MMS19 and SLC25A5. Interacts with WT1. Interacts with CIAO3. Interacts (via LYR motif) with HSC20.

Its subcellular location is the cytoplasm. In terms of biological role, key component of the cytosolic iron-sulfur protein assembly (CIA) complex, a multiprotein complex that mediates the incorporation of iron-sulfur cluster into extramitochondrial Fe/S proteins. As a CIA complex component, interacts specifically with CIAO2A or CIAO2B and MMS19 to assist different branches of iron-sulfur protein assembly, depending of its interactors. The complex CIAO1:CIAO2B:MMS19 binds to and facilitates the assembly of most cytosolic-nuclear Fe/S proteins. CIAO1:CIAO2A specifically matures ACO1 and stabilizes IREB2. Seems to specifically modulate the transactivation activity of WT1. As part of the mitotic spindle-associated MMXD complex it may play a role in chromosome segregation. The protein is Probable cytosolic iron-sulfur protein assembly protein CIAO1 of Bos taurus (Bovine).